Here is a 301-residue protein sequence, read N- to C-terminus: Mitochondrial substrate carrier family protein Z (301 aa).

The Mitochondrial intermembrane segment spans residues 1–19; the sequence is MTGKEENKQQQHVNFPWKR. Solcar repeat units lie at residues 14–101, 116–200, and 210–293; these read NFPW…FTEQ, QQFG…ISDY, and LPVW…VMGI. Residues 20 to 37 traverse the membrane as a helical segment; it reads LVAGAVAGTADVWACHPL. The Mitochondrial matrix segment spans residues 38 to 65; the sequence is DRIKTQLQNNPGKSIVGTFGDIVSKGKG. The helical transmembrane segment at 66 to 86 threads the bilayer; it reads FTGGVNALYEGILPMTAEAIF. The Mitochondrial intermembrane segment spans residues 87-117; the sequence is KVGIRYFAFSWFTEQYKTTVYKGETLNKKQQ. The helical transmembrane segment at 118-138 threads the bilayer; sequence FGANLLGGAFAGTIESFVVVI. The Mitochondrial matrix portion of the chain corresponds to 139-174; sequence PCELLKVRHMTQEHNKSFGTVFRDVLREEGFQGLYK. The chain crosses the membrane as a helical span at residues 175-191; the sequence is GGSATLLRQITNHMIRF. The Mitochondrial intermembrane segment spans residues 192-212; sequence PTFYAISDYLKGGDHSVHLPV. Residues 213–229 traverse the membrane as a helical segment; it reads WQNLSAGAIAGTASTLF. The Mitochondrial matrix portion of the chain corresponds to 230-275; sequence NNPLDTIKTRMQKQGQNQTTMQVVRGIYQETGVKGYWAGVIPRILR. Residues 276–296 traverse the membrane as a helical segment; that stretch reads VAPGQAITWAVVELVMGILEP. Over 297-301 the chain is Mitochondrial intermembrane; that stretch reads SSKKH.

The protein belongs to the mitochondrial carrier (TC 2.A.29) family.

It localises to the mitochondrion inner membrane. Its function is as follows. Mitochondrial solute carriers shuttle metabolites, nucleotides, and cofactors through the mitochondrial inner membrane. This chain is Mitochondrial substrate carrier family protein Z (mcfZ), found in Dictyostelium discoideum (Social amoeba).